The sequence spans 423 residues: MERMLPFLALGLLVAGFCPAVLCHPNCPLDEENPTQENQDRGTHVDLGLASTNVDFAFSLYKQLVLKAPDKNVIFSPLSISTALAFLSLGAHNTTLTEILTGLRFNLTETSEAEIHQSFQHLLRTLNQSSDELQLSMGNAMFVEEQLSLLDRFMEDAKRLYGSEAFATDFQDSAAAKKLINDYVKNRTRGKITDLIKDLDSQTMMVLVNYIFFKAKWKMPFDPQDTHQSRFYLSKKKWVMVPMMSLHHLTTPYFRDEELSCTVVELKYTGNASALFILPDQDKMEEVEAMLLPETLKRWRDSLEFRRIDELYLPKFSISRAFNLENILLQLGIVEAFTSKADLSGITGARNLVVSQVVHKAVLDVFEEGTEASAATAVKITLLSALVDPMTIVRFNRPFLMIIVPTDTQNLLFISKVINPKQA.

The N-terminal stretch at 1 to 23 (MERMLPFLALGLLVAGFCPAVLC) is a signal peptide. N-linked (GlcNAc...) asparagine glycosylation is found at N93, N106, N127, N186, and N271. The interval 369–394 (GTEASAATAVKITLLSALVDPMTIVR) is RCL.

Belongs to the serpin family. As to quaternary structure, interacts with DNAJC1. Plasma.

The protein localises to the secreted. Functionally, although its physiological function is unclear, it can inhibit neutrophil cathepsin G and mast cell chymase, both of which can convert angiotensin-1 to the active angiotensin-2. The protein is Alpha-1-antichymotrypsin (SERPINA3) of Pongo abelii (Sumatran orangutan).